A 24-amino-acid chain; its full sequence is Poly-His-poly-Gly peptide 1 (24 aa).

Over residues 1–13 (EDDHHHHHHHHHG) the composition is skewed to basic residues. Residues 1–24 (EDDHHHHHHHHHGVGGGGGGGGGG) are disordered. Residues 14–24 (VGGGGGGGGGG) are compositionally biased toward gly residues.

Expressed by the venom gland.

It is found in the secreted. Its function is as follows. May serve as a metalloproteinase inhibitor during glandular storage. Their inhibition may be instantly disengaged, by dilution or physiochemical change, when venom is injected into tissue of the victim. The chain is Poly-His-poly-Gly peptide 1 from Atheris chlorechis (Western bush viper).